The chain runs to 251 residues: Elongation factor Ts (251 aa).

The interval 82 to 85 (TDFV) is involved in Mg(2+) ion dislocation from EF-Tu. The tract at residues 215–251 (QMGQKAPEPVAAAPQVEEKAPEPAAKDNPPAKGKKKK) is disordered. Positions 219–229 (KAPEPVAAAPQ) are enriched in low complexity. A compositionally biased stretch (basic and acidic residues) spans 230–239 (VEEKAPEPAA).

This sequence belongs to the EF-Ts family.

The protein resides in the cytoplasm. Associates with the EF-Tu.GDP complex and induces the exchange of GDP to GTP. It remains bound to the aminoacyl-tRNA.EF-Tu.GTP complex up to the GTP hydrolysis stage on the ribosome. The polypeptide is Elongation factor Ts (Microcystis aeruginosa (strain NIES-843 / IAM M-2473)).